A 159-amino-acid chain; its full sequence is ATP synthase subunit b 2 (159 aa).

The helical transmembrane segment at 1-21 threads the bilayer; that stretch reads MDATFWALIGLIIFLAILAYL.

The protein belongs to the ATPase B chain family. In terms of assembly, F-type ATPases have 2 components, F(1) - the catalytic core - and F(0) - the membrane proton channel. F(1) has five subunits: alpha(3), beta(3), gamma(1), delta(1), epsilon(1). F(0) has three main subunits: a(1), b(2) and c(10-14). The alpha and beta chains form an alternating ring which encloses part of the gamma chain. F(1) is attached to F(0) by a central stalk formed by the gamma and epsilon chains, while a peripheral stalk is formed by the delta and b chains.

It is found in the cell inner membrane. In terms of biological role, f(1)F(0) ATP synthase produces ATP from ADP in the presence of a proton or sodium gradient. F-type ATPases consist of two structural domains, F(1) containing the extramembraneous catalytic core and F(0) containing the membrane proton channel, linked together by a central stalk and a peripheral stalk. During catalysis, ATP synthesis in the catalytic domain of F(1) is coupled via a rotary mechanism of the central stalk subunits to proton translocation. Component of the F(0) channel, it forms part of the peripheral stalk, linking F(1) to F(0). The sequence is that of ATP synthase subunit b 2 from Brucella anthropi (strain ATCC 49188 / DSM 6882 / CCUG 24695 / JCM 21032 / LMG 3331 / NBRC 15819 / NCTC 12168 / Alc 37) (Ochrobactrum anthropi).